A 240-amino-acid chain; its full sequence is Phosphatidylserine decarboxylase proenzyme (240 aa).

Serine 209 acts as the Schiff-base intermediate with substrate; via pyruvic acid in catalysis. Pyruvic acid (Ser); by autocatalysis is present on serine 209.

It belongs to the phosphatidylserine decarboxylase family. PSD-A subfamily. Heterodimer of a large membrane-associated beta subunit and a small pyruvoyl-containing alpha subunit. Pyruvate is required as a cofactor. In terms of processing, is synthesized initially as an inactive proenzyme. Formation of the active enzyme involves a self-maturation process in which the active site pyruvoyl group is generated from an internal serine residue via an autocatalytic post-translational modification. Two non-identical subunits are generated from the proenzyme in this reaction, and the pyruvate is formed at the N-terminus of the alpha chain, which is derived from the carboxyl end of the proenzyme. The post-translation cleavage follows an unusual pathway, termed non-hydrolytic serinolysis, in which the side chain hydroxyl group of the serine supplies its oxygen atom to form the C-terminus of the beta chain, while the remainder of the serine residue undergoes an oxidative deamination to produce ammonia and the pyruvoyl prosthetic group on the alpha chain.

It is found in the cell membrane. It carries out the reaction a 1,2-diacyl-sn-glycero-3-phospho-L-serine + H(+) = a 1,2-diacyl-sn-glycero-3-phosphoethanolamine + CO2. The protein operates within phospholipid metabolism; phosphatidylethanolamine biosynthesis; phosphatidylethanolamine from CDP-diacylglycerol: step 2/2. Catalyzes the formation of phosphatidylethanolamine (PtdEtn) from phosphatidylserine (PtdSer). The chain is Phosphatidylserine decarboxylase proenzyme from Mycobacterium ulcerans (strain Agy99).